The sequence spans 230 residues: Protein FAM3A (230 aa).

An N-terminal signal peptide occupies residues M1–G33. 2 disulfide bridges follow: C59/C87 and C65/C222. Positions E68–R226 constitute a GG-type lectin domain.

It belongs to the FAM3 family.

The protein localises to the secreted. The sequence is that of Protein FAM3A (Fam3a) from Mus musculus (Mouse).